A 642-amino-acid chain; its full sequence is Threonine--tRNA ligase (642 aa).

The TGS domain maps to 1-61 (MPVIRFCDGS…TEDSSISFIS (61 aa)). The tract at residues 243-534 (DHRKIGKLLN…LIEEFSGKLP (292 aa)) is catalytic. Zn(2+)-binding residues include C334, H385, and H511.

Belongs to the class-II aminoacyl-tRNA synthetase family. In terms of assembly, homodimer. Zn(2+) serves as cofactor.

It is found in the cytoplasm. The enzyme catalyses tRNA(Thr) + L-threonine + ATP = L-threonyl-tRNA(Thr) + AMP + diphosphate + H(+). Catalyzes the attachment of threonine to tRNA(Thr) in a two-step reaction: L-threonine is first activated by ATP to form Thr-AMP and then transferred to the acceptor end of tRNA(Thr). Also edits incorrectly charged L-seryl-tRNA(Thr). The protein is Threonine--tRNA ligase of Buchnera aphidicola subsp. Schizaphis graminum (strain Sg).